The primary structure comprises 235 residues: Uridylate kinase (235 aa).

9–12 is an ATP binding site; that stretch reads KLSG. Glycine 51 is a binding site for UMP. Glycine 52 and arginine 56 together coordinate ATP. Residues aspartate 71 and 133–140 contribute to the UMP site; that span reads SGNPFFTT. The ATP site is built by threonine 160, tyrosine 166, and aspartate 169.

Belongs to the UMP kinase family. In terms of assembly, homohexamer.

It is found in the cytoplasm. It catalyses the reaction UMP + ATP = UDP + ADP. Its pathway is pyrimidine metabolism; CTP biosynthesis via de novo pathway; UDP from UMP (UMPK route): step 1/1. Its activity is regulated as follows. Inhibited by UTP. Catalyzes the reversible phosphorylation of UMP to UDP. The protein is Uridylate kinase of Gloeobacter violaceus (strain ATCC 29082 / PCC 7421).